The primary structure comprises 255 residues: Tryptophan synthase alpha chain (255 aa).

Catalysis depends on proton acceptor residues Glu-44 and Asp-55.

The protein belongs to the TrpA family. As to quaternary structure, tetramer of two alpha and two beta chains.

The catalysed reaction is (1S,2R)-1-C-(indol-3-yl)glycerol 3-phosphate + L-serine = D-glyceraldehyde 3-phosphate + L-tryptophan + H2O. It functions in the pathway amino-acid biosynthesis; L-tryptophan biosynthesis; L-tryptophan from chorismate: step 5/5. Functionally, the alpha subunit is responsible for the aldol cleavage of indoleglycerol phosphate to indole and glyceraldehyde 3-phosphate. The protein is Tryptophan synthase alpha chain of Dehalococcoides mccartyi (strain ATCC BAA-2100 / JCM 16839 / KCTC 5957 / BAV1).